The sequence spans 347 residues: NADH-ubiquinone oxidoreductase chain 2 (347 aa).

Helical transmembrane passes span 5 to 22 (ILAIVMSTVISGTIMVLI), 26 to 45 (WLTIWIGFEMNMLAIIPILM), 60 to 80 (FLTQATASMLLMLGIIINLLL), 150 to 170 (NPNLLMAMAIMSVLVGGWGGL), 178 to 198 (ILAYSSIAHMGWMIAVTTYNP), 200 to 220 (LMLLNLTIYITMTLGTFMLFM), 237 to 257 (LPLIASLILMTMLSLGGLPPL), 274 to 294 (DMAIMATFMAMTALLNLYFYM), and 327 to 347 (PPLIMISTMLLPLTPMVLTLF).

It belongs to the complex I subunit 2 family. As to quaternary structure, core subunit of respiratory chain NADH dehydrogenase (Complex I) which is composed of 45 different subunits. Interacts with TMEM242.

The protein localises to the mitochondrion inner membrane. The catalysed reaction is a ubiquinone + NADH + 5 H(+)(in) = a ubiquinol + NAD(+) + 4 H(+)(out). Core subunit of the mitochondrial membrane respiratory chain NADH dehydrogenase (Complex I) which catalyzes electron transfer from NADH through the respiratory chain, using ubiquinone as an electron acceptor. Essential for the catalytic activity and assembly of complex I. This chain is NADH-ubiquinone oxidoreductase chain 2, found in Martes zibellina (Sable).